The primary structure comprises 255 residues: Endonuclease 8 2 (255 aa).

Proline 2 serves as the catalytic Schiff-base intermediate with DNA. Residue glutamate 3 is the Proton donor of the active site. Lysine 51 (proton donor; for beta-elimination activity) is an active-site residue. 2 residues coordinate DNA: glutamine 67 and asparagine 164. An FPG-type zinc finger spans residues 221–255; the sequence is WVYGRAGQGCRRCGTLIAYDTTDERVRYWCPACQR. Residue arginine 245 is the Proton donor; for delta-elimination activity of the active site.

This sequence belongs to the FPG family. It depends on Zn(2+) as a cofactor.

It carries out the reaction 2'-deoxyribonucleotide-(2'-deoxyribose 5'-phosphate)-2'-deoxyribonucleotide-DNA = a 3'-end 2'-deoxyribonucleotide-(2,3-dehydro-2,3-deoxyribose 5'-phosphate)-DNA + a 5'-end 5'-phospho-2'-deoxyribonucleoside-DNA + H(+). Functionally, involved in base excision repair of DNA damaged by oxidation or by mutagenic agents. Acts as a DNA glycosylase that recognizes and removes damaged bases. Has AP (apurinic/apyrimidinic) lyase activity and introduces nicks in the DNA strand. Cleaves the DNA backbone by beta-delta elimination to generate a single-strand break at the site of the removed base with both 3'- and 5'-phosphates. The chain is Endonuclease 8 2 (nei2) from Mycobacterium bovis (strain ATCC BAA-935 / AF2122/97).